The following is a 156-amino-acid chain: Small ribosomal subunit protein uS7 (156 aa).

This sequence belongs to the universal ribosomal protein uS7 family. As to quaternary structure, part of the 30S ribosomal subunit. Contacts proteins S9 and S11.

In terms of biological role, one of the primary rRNA binding proteins, it binds directly to 16S rRNA where it nucleates assembly of the head domain of the 30S subunit. Is located at the subunit interface close to the decoding center, probably blocks exit of the E-site tRNA. This Acidithiobacillus ferrooxidans (strain ATCC 53993 / BNL-5-31) (Leptospirillum ferrooxidans (ATCC 53993)) protein is Small ribosomal subunit protein uS7.